The chain runs to 377 residues: Alanine racemase (377 aa).

Lys-37 acts as the Proton acceptor; specific for D-alanine in catalysis. Lys-37 bears the N6-(pyridoxal phosphate)lysine mark. Arg-135 is a substrate binding site. Tyr-271 functions as the Proton acceptor; specific for L-alanine in the catalytic mechanism. Residue Met-319 participates in substrate binding.

This sequence belongs to the alanine racemase family. Pyridoxal 5'-phosphate serves as cofactor.

The enzyme catalyses L-alanine = D-alanine. It participates in amino-acid biosynthesis; D-alanine biosynthesis; D-alanine from L-alanine: step 1/1. Its function is as follows. Catalyzes the interconversion of L-alanine and D-alanine. May also act on other amino acids. The polypeptide is Alanine racemase (alr) (Helicobacter pylori (strain P12)).